The sequence spans 399 residues: uncharacterized protein (399 aa).

The next 10 helical transmembrane spans lie at 7 to 27 (FSAL…LYLI), 33 to 53 (FLQI…FEVP), 79 to 99 (AFFP…IWAL), 131 to 151 (LLIT…SLNI), 153 to 173 (FPFL…SVFI), 208 to 228 (VLLI…ISRY), 242 to 262 (SLGY…TLTI), 296 to 316 (PLGI…HPIV), 335 to 355 (LNSG…GIIS), and 357 to 377 (AFGL…PIIL).

It belongs to the major facilitator superfamily. Drug:H(+) antiporter-3 (DHA3) (TC 2.A.1.21) family.

It localises to the cell membrane. This is an uncharacterized protein from Bacillus subtilis (strain 168).